The sequence spans 242 residues: GATA zinc finger domain-containing protein 1 (242 aa).

The segment at Cys9 to Cys33 adopts a GATA-type zinc-finger fold. A disordered region spans residues Gly44–Lys85. The span at Ala45–Asn54 shows a compositional bias: low complexity.

Its subcellular location is the nucleus. In terms of biological role, component of some chromatin complex recruited to chromatin sites methylated 'Lys-4' of histone H3 (H3K4me), with a preference for trimethylated form (H3K4me3). This is GATA zinc finger domain-containing protein 1 (gatad1) from Danio rerio (Zebrafish).